The primary structure comprises 401 residues: Lipoyl synthase 1, mitochondrial (401 aa).

Residues 1–25 constitute a mitochondrion transit peptide; it reads MWSSSSSLCRNPSFRRAWLSTVTVT. A disordered region spans residues 49-79; that stretch reads IDDFSSTNAPTTTTHYTSSNGSPIVRQKAAP. Positions 51–70 are enriched in polar residues; it reads DFSSTNAPTTTTHYTSSNGS. [4Fe-4S] cluster-binding residues include Cys117, Cys122, Cys128, Cys148, Cys152, Cys155, and Ser376. The Radical SAM core domain occupies 133–365; sequence EDQTATATIM…QETAMGMGFA (233 aa).

The protein belongs to the radical SAM superfamily. Lipoyl synthase family. The cofactor is [4Fe-4S] cluster.

It is found in the mitochondrion. It carries out the reaction [[Fe-S] cluster scaffold protein carrying a second [4Fe-4S](2+) cluster] + N(6)-octanoyl-L-lysyl-[protein] + 2 oxidized [2Fe-2S]-[ferredoxin] + 2 S-adenosyl-L-methionine + 4 H(+) = [[Fe-S] cluster scaffold protein] + N(6)-[(R)-dihydrolipoyl]-L-lysyl-[protein] + 4 Fe(3+) + 2 hydrogen sulfide + 2 5'-deoxyadenosine + 2 L-methionine + 2 reduced [2Fe-2S]-[ferredoxin]. It participates in protein modification; protein lipoylation via endogenous pathway; protein N(6)-(lipoyl)lysine from octanoyl-[acyl-carrier-protein]: step 2/2. Its function is as follows. Catalyzes the radical-mediated insertion of two sulfur atoms into the C-6 and C-8 positions of the octanoyl moiety bound to the lipoyl domains of lipoate-dependent enzymes, thereby converting the octanoylated domains into lipoylated derivatives. This is Lipoyl synthase 1, mitochondrial from Phaeodactylum tricornutum (strain CCAP 1055/1).